The primary structure comprises 215 residues: Putative O-methyltransferase MAB_1361c (215 aa).

S-adenosyl-L-methionine contacts are provided by residues Val-42, Glu-64, 66 to 67 (GT), Ser-72, Asp-90, and Val-91. Asp-138 serves as a coordination point for substrate.

Belongs to the class I-like SAM-binding methyltransferase superfamily. Cation-dependent O-methyltransferase family.

In Mycobacteroides abscessus (strain ATCC 19977 / DSM 44196 / CCUG 20993 / CIP 104536 / JCM 13569 / NCTC 13031 / TMC 1543 / L948) (Mycobacterium abscessus), this protein is Putative O-methyltransferase MAB_1361c.